A 396-amino-acid chain; its full sequence is MTEHNVRNFTINFGPEHPSAHGVLRLVLELDGEIVERVDPHIGLLHRGTEKLIETKTYLQAVPYFDRLDYVAPMNQEHAFALAVEKLLGLEIPMRGQLIRVLYSEIGRILSHIMNVTTQAMDVGAMTPPVWGFEEREKLMVFYERACGARMHSAYVRPGGVHQDLPPELVDDIGKWCDPFLTVLDNIEGLLTDNRIYKQRNVDIGVVSLEDAFAWGFTGVMVRGSGAAWDLRRSQPYECYSDLEFDIPVGKNGDCYDRYLIRMQEMRESVKIMKQCVDRLSGKHRIGPVSSLDGKVVPPKRGEMKRSMEALIHHFKLYTEGYHVPAGEVYAAVEAPKGEFGVYVVADGSNKPYRCKIRAPGYAHLQAMDFLCKGHQLADVTAVLGSLDIVFGEVDR.

This sequence belongs to the complex I 49 kDa subunit family. NDH-1 is composed of 14 different subunits. Subunits NuoB, C, D, E, F, and G constitute the peripheral sector of the complex.

It is found in the cell inner membrane. The catalysed reaction is a quinone + NADH + 5 H(+)(in) = a quinol + NAD(+) + 4 H(+)(out). NDH-1 shuttles electrons from NADH, via FMN and iron-sulfur (Fe-S) centers, to quinones in the respiratory chain. The immediate electron acceptor for the enzyme in this species is believed to be ubiquinone. Couples the redox reaction to proton translocation (for every two electrons transferred, four hydrogen ions are translocated across the cytoplasmic membrane), and thus conserves the redox energy in a proton gradient. The protein is NADH-quinone oxidoreductase subunit D of Agrobacterium fabrum (strain C58 / ATCC 33970) (Agrobacterium tumefaciens (strain C58)).